Here is a 194-residue protein sequence, read N- to C-terminus: Flagellin A2 (194 aa).

Residues 1-12 constitute a propeptide that is removed on maturation; sequence MFEFITDEDERG.

This sequence belongs to the archaeal flagellin family. Post-translationally, glycosylated.

It is found in the archaeal flagellum. In terms of biological role, flagellin is the subunit protein which polymerizes to form the filaments of archaeal flagella. This Halobacterium salinarum (strain ATCC 700922 / JCM 11081 / NRC-1) (Halobacterium halobium) protein is Flagellin A2 (flaA2).